Consider the following 147-residue polypeptide: Ubiquitin-conjugating enzyme E2 D3 (147 aa).

Residues 1 to 147 (MALKRINKEL…SREWTQKYAM (147 aa)) form the UBC core domain. Cys-21 and Cys-107 are oxidised to a cystine. The active-site Glycyl thioester intermediate is the Cys-85.

Belongs to the ubiquitin-conjugating enzyme family. In terms of assembly, interacts with SCF (SKP1-CUL1-F-box protein) E3 ubiquitin ligase complex; when Cullin is neddylated, the interaction between the E2 and the SCF complex is strengthened. Interacts with DAPK3. Interacts with BRCA1; the DNA damage checkpoint promotes the association with BRCA1 after ionizing radiation. Interacts non-covalently with ubiquitin. Interacts with E3 ubiquitin-protein ligase CBLC. Interacts with UBTD1. Interacts with RIGI and RNF135; involved in RIGI ubiquitination and activation. Post-translationally, phosphorylated by AURKB.

The protein resides in the cell membrane. It is found in the endosome membrane. It carries out the reaction S-ubiquitinyl-[E1 ubiquitin-activating enzyme]-L-cysteine + [E2 ubiquitin-conjugating enzyme]-L-cysteine = [E1 ubiquitin-activating enzyme]-L-cysteine + S-ubiquitinyl-[E2 ubiquitin-conjugating enzyme]-L-cysteine.. It catalyses the reaction S-ubiquitinyl-[E1 ubiquitin-activating enzyme]-L-cysteine + [acceptor protein]-L-lysine = [E1 ubiquitin-activating enzyme]-L-cysteine + N(6)-monoubiquitinyl-[acceptor protein]-L-lysine.. Its pathway is protein modification; protein ubiquitination. In terms of biological role, accepts ubiquitin from the E1 complex and catalyzes its covalent attachment to other proteins. In vitro catalyzes 'Lys-11'-, as well as 'Lys-48'-linked polyubiquitination. Cooperates with the E2 CDC34 and the SCF(FBXW11) E3 ligase complex for the polyubiquitination of NFKBIA leading to its subsequent proteasomal degradation. Acts as an initiator E2, priming the phosphorylated NFKBIA target at positions 'Lys-21' and/or 'Lys-22' with a monoubiquitin. Ubiquitin chain elongation is then performed by CDC34, building ubiquitin chains from the UBE2D3-primed NFKBIA-linked ubiquitin. Also acts as an initiator E2, in conjunction with RNF8, for the priming of PCNA. Monoubiquitination of PCNA, and its subsequent polyubiquitination, are essential events in the operation of the DNA damage tolerance (DDT) pathway that is activated after DNA damage caused by UV or chemical agents during S-phase. Associates with the BRCA1/BARD1 E3 ligase complex to perform ubiquitination at DNA damage sites following ionizing radiation leading to DNA repair. Targets DAPK3 for ubiquitination which influences promyelocytic leukemia protein nuclear body (PML-NB) formation in the nucleus. In conjunction with the MDM2 and TOPORS E3 ligases, functions ubiquitination of p53/TP53. In conjunction with the CBL E3 ligase, targets EGFR for polyubiquitination at the plasma membrane as well as during its internalization and transport on endosomes. In conjunction with the STUB1 E3 quality control E3 ligase, ubiquitinates unfolded proteins to catalyze their immediate destruction. Together with RNF135, catalyzes the viral RNA-dependent 'Lys-63'-linked polyubiquitination of RIGI to activate the downstream signaling pathway that leads to interferon beta production. Together with ZNF598, catalyzes ubiquitination of 40S ribosomal proteins in response to ribosome collisions. In cooperation with the GATOR2 complex, catalyzes 'Lys-6'-linked ubiquitination of NPRL2. This Homo sapiens (Human) protein is Ubiquitin-conjugating enzyme E2 D3 (UBE2D3).